The following is a 445-amino-acid chain: Trigger factor (445 aa).

Residues 164-249 form the PPIase FKBP-type domain; sequence GDQVTFDFEG…VKKVEEAKLP (86 aa).

Belongs to the FKBP-type PPIase family. Tig subfamily.

The protein resides in the cytoplasm. The enzyme catalyses [protein]-peptidylproline (omega=180) = [protein]-peptidylproline (omega=0). Its function is as follows. Involved in protein export. Acts as a chaperone by maintaining the newly synthesized protein in an open conformation. Functions as a peptidyl-prolyl cis-trans isomerase. This chain is Trigger factor, found in Psychrobacter sp. (strain PRwf-1).